The primary structure comprises 238 residues: Purine nucleoside phosphorylase DeoD-type (238 aa).

His-4 is an a purine D-ribonucleoside binding site. Residues Gly-20, Arg-24, Arg-43, and 87–90 (RVGS) contribute to the phosphate site. Residues 179-181 (EME) and 203-204 (SD) contribute to the a purine D-ribonucleoside site. Catalysis depends on Asp-204, which acts as the Proton donor.

It belongs to the PNP/UDP phosphorylase family. In terms of assembly, homohexamer; trimer of homodimers.

The enzyme catalyses a purine D-ribonucleoside + phosphate = a purine nucleobase + alpha-D-ribose 1-phosphate. The catalysed reaction is a purine 2'-deoxy-D-ribonucleoside + phosphate = a purine nucleobase + 2-deoxy-alpha-D-ribose 1-phosphate. Catalyzes the reversible phosphorolytic breakdown of the N-glycosidic bond in the beta-(deoxy)ribonucleoside molecules, with the formation of the corresponding free purine bases and pentose-1-phosphate. This is Purine nucleoside phosphorylase DeoD-type from Haemophilus influenzae (strain PittEE).